The primary structure comprises 104 residues: Circadian clock oscillator protein KaiB (104 aa).

This sequence belongs to the KaiB family. In terms of assembly, the KaiABC complex composition changes during the circadian cycle to control KaiC phosphorylation. Complexes KaiC(6), KaiA(2-4):KaiC(6), KaiB(6):KaiC(6) and KaiC(6):KaiB(6):KaiA(12) are among the most important forms, many form cooperatively. Undergoes a major conformational rearrangment; in the free state forms homotetramers as a dimer of dimers. When bound to the CI domain of KaiC switches to a monomeric thioredoxin-fold (KaiB(fs)). KaiB(fs) binds CikA, leading it to dephosphorylate phospho-RpaA.

Functionally, key component of the KaiABC oscillator complex, which constitutes the main circadian regulator in cyanobacteria. Complex composition changes during the circadian cycle to control KaiC phosphorylation. KaiA stimulates KaiC autophosphorylation, while KaiB sequesters KaiA, leading to KaiC autodephosphorylation. Phospho-Ser-431 KaiC accumulation triggers binding of KaiB to form the KaiB(6):KaiC(6) complex, leading to changes in output regulators CikA and SasA. KaiB switches to a thioredoxin-like fold (KaiB(fs)) when bound to KaiC. KaiB(6):KaiC(6) formation exposes a site for KaiA binding that sequesters KaiA from KaiC, making the KaiC(6):KaiB(6):KaiA(12) complex that results in KaiC autodephosphorylation. Its function is as follows. A metamorphic protein which reversibly switches between an inactive tetrameric fold and a rare, thioredoxin-like monomeric fold (KaiB(fs)). KaiB(fs) binds phospho-KaiC, KaiA and CikA. KaiA and CikA compete for binding to KaiB(fs), and KaiB(fs) and SasA compete for binding to KaiC, thus the clock oscillator and output signal pathway are tightly coupled. The sequence is that of Circadian clock oscillator protein KaiB from Trichodesmium erythraeum (strain IMS101).